Consider the following 213-residue polypeptide: AN1-type zinc finger protein 5 (213 aa).

The A20-type zinc-finger motif lies at 8 to 42 (TPGPMLCSTGCGFYGNPRTNGMCSVCYKEHLQRQQ). Zn(2+) contacts are provided by cysteine 14, cysteine 18, cysteine 30, and cysteine 33. Residues 39–149 (QRQQNSGRMS…EEKAPELPKP (111 aa)) form a disordered region. A compositionally biased stretch (polar residues) spans 40-75 (RQQNSGRMSPMGTASGSNSPTSDSASVQRADTSLNN). Serine 48 and serine 58 each carry phosphoserine. The segment covering 120 to 138 (SEPVVTQPSPSVSQPSTSQ) has biased composition (low complexity). Over residues 139 to 148 (SEEKAPELPK) the composition is skewed to basic and acidic residues. An AN1-type zinc finger spans residues 148–194 (KPKKNRCFMCRKKVGLTGFDCRCGNLFCGLHRYSDKHNCPYDYKAEA). Zn(2+)-binding residues include cysteine 154, cysteine 157, cysteine 168, cysteine 170, cysteine 175, histidine 178, histidine 184, and cysteine 186. Lysine 209 carries the N6-acetyllysine modification.

In terms of assembly, interacts with ubiquitin and polyubiquitinated proteins. Identified in a heterotrimeric complex with ubiquitin and SQSTM1, where ZFAND5 and SQSTM1 both interact with the same ubiquitin molecule. Homooligomer and/or heterooligomer. Interacts (via A20-type domain) with IKBKG and RIPK1 and with TRAF6 (via AN1-type domain). As to expression, highly expressed in skeletal muscle. Expressed in fetal cochlea. Also expressed in infant brain, fetal heart, pancreatic islet, melanocyte, pineal gland, placenta, corneal stroma, and parathyroid tumor. Weakly expressed or undetectable in adult brain, heart, colon, thymus, spleen, kidney, liver, small intestine, placenta, lung and peripheral blood leukocytes. Expressed in rhabdomyosarcoma RD cells (at protein level).

The protein resides in the cytoplasm. Its function is as follows. Involved in protein degradation via the ubiquitin-proteasome system. May act by anchoring ubiquitinated proteins to the proteasome. Plays a role in ubiquitin-mediated protein degradation during muscle atrophy. Plays a role in the regulation of NF-kappa-B activation and apoptosis. Inhibits NF-kappa-B activation triggered by overexpression of RIPK1 and TRAF6 but not of RELA. Also inhibits tumor necrosis factor (TNF), IL-1 and TLR4-induced NF-kappa-B activation in a dose-dependent manner. Overexpression sensitizes cells to TNF-induced apoptosis. Is a potent inhibitory factor for osteoclast differentiation. In Homo sapiens (Human), this protein is AN1-type zinc finger protein 5 (ZFAND5).